The following is a 572-amino-acid chain: EF-hand calcium-binding domain-containing protein 12 (572 aa).

Disordered regions lie at residues 62–85 (VPRK…KPIP) and 146–169 (EQSA…PRLS). The EF-hand domain maps to 196–231 (SRKIKILEIFHKVGQGENQRITREEFIAAVKAVGVP). A Ca(2+)-binding site is contributed by Glu212.

This chain is EF-hand calcium-binding domain-containing protein 12 (EFCAB12), found in Homo sapiens (Human).